We begin with the raw amino-acid sequence, 302 residues long: MSEDEEKVKLRRLEPAIQKFIKIVIPTDLERLRKHQINIEKYQRCRIWDKLHEEHINAGRTVQQLRSNIREIEKLCLKVRKDDLVLLKRMIDPVKEEASAATAEFLQLHLESVEELKKQFNDEETLLQPPLTRSMTVGGAFHTTEAEASSQSLTQIYALPEIPQDQNAAESWETLEADLIELSQLVTDFSLLVNSQQEKIDSIADHVNSAAVNVEEGTKNLGKAAKYKLAALPVAGALIGGMVGGPIGLLAGFKVAGIAAALGGGVLGFTGGKLIQRKKQKMMEKLTSSCPDLPSQTDKKCS.

An N-acetylserine modification is found at Ser2. Residues 2–228 are Cytoplasmic-facing; sequence SEDEEKVKLR…KNLGKAAKYK (227 aa). An N6-acetyllysine modification is found at Lys41. Positions 53–123 form a coiled coil; the sequence is EEHINAGRTV…EELKKQFNDE (71 aa). A Phosphotyrosine; by ABL1 modification is found at Tyr157. In terms of domain architecture, t-SNARE coiled-coil homology spans 162 to 224; sequence IPQDQNAAES…EEGTKNLGKA (63 aa). A helical membrane pass occupies residues 229–249; the sequence is LAALPVAGALIGGMVGGPIGL. Positions 229–275 are necessary and sufficient for localization to autophagosome; the sequence is LAALPVAGALIGGMVGGPIGLLAGFKVAGIAAALGGGVLGFTGGKLI. Topologically, residues 250–254 are lumenal; the sequence is LAGFK. The chain crosses the membrane as a helical span at residues 255–275; sequence VAGIAAALGGGVLGFTGGKLI. Over 276-302 the chain is Cytoplasmic; the sequence is QRKKQKMMEKLTSSCPDLPSQTDKKCS. Ser289 is modified (phosphoserine). The Endoplasmic reticulum retention signal signature appears at 299–302; it reads KKCS.

This sequence belongs to the syntaxin family. Forms a SNARE complex composed of VAMP8, SNAP29 and STX17 involved in fusion of autophagosome with lysosome. Interacts with VAMP7 and VTI1B. Probably interacts with BET1, SCFD1 and SEC22B. Interacts with PTPN2 and ABL1; involved in STX17 phosphorylation. Interacts with COPB1. Interacts with TMED9 and TMED10; the interaction is direct. Interacts with ATG14. Interacts with RUBCNL/PACER; promoting targeting of RUBCNL/PACER to autophagosome. Interacts with VAMP8, SNAP29, VPS39 and VPS41; these interactions are increased in the absence of TMEM39A. Interacts with IRGM; promoting STX17 recruitment to autophagosomes. Interacts with ATG8 proteins GABARAP and MAP1LC3B. Interacts with RNF115; this interaction enhances STX17 stability which in turn promotes autophagosome maturation. Interacts with RAB39A (GTP-bound); the interaction promotes autophagosome-lysosome membrane fusion driven by STX17-SNAP29-VAMP8. Interacts with RAB39B; the interaction may promote a different fonction in autophagy as compared with RAB39A. In terms of assembly, (Microbial infection) The interactions with VAMP8, SNAP29 and VPS41 are decreased in presence of SARS coronavirus-2/SARS-CoV-2 ORF3A protein. Post-translationally, phosphorylated at Tyr-157 probably by ABL1. Dephosphorylation by PTPN2; regulates exit from the endoplasmic reticulum. (Microbial infection) Cleaved by the L.pneumophila serine protease Lpg1137, impairing endoplasmic reticulum-mitochondria communication, leading to inhibit autophagy.

The protein localises to the endoplasmic reticulum membrane. It localises to the smooth endoplasmic reticulum membrane. Its subcellular location is the endoplasmic reticulum-Golgi intermediate compartment membrane. It is found in the cytoplasmic vesicle. The protein resides in the autophagosome membrane. The protein localises to the COPII-coated vesicle membrane. It localises to the cytoplasm. Its subcellular location is the cytosol. It is found in the mitochondrion membrane. The protein resides in the autolysosome membrane. Its function is as follows. SNAREs, soluble N-ethylmaleimide-sensitive factor-attachment protein receptors, are essential proteins for fusion of cellular membranes. SNAREs localized on opposing membranes assemble to form a trans-SNARE complex, an extended, parallel four alpha-helical bundle that drives membrane fusion. STX17 is a SNARE of the autophagosome involved in autophagy through the direct control of autophagosome membrane fusion with the lysosome membrane. May also play a role in the early secretory pathway where it may maintain the architecture of the endoplasmic reticulum-Golgi intermediate compartment/ERGIC and Golgi and/or regulate transport between the endoplasmic reticulum, the ERGIC and the Golgi. This is Syntaxin-17 from Homo sapiens (Human).